The sequence spans 65 residues: Large ribosomal subunit protein bL33 (65 aa).

The disordered stretch occupies residues 20 to 42; sequence APASEKRSPGVSRYTTEKNRRNT.

The protein belongs to the bacterial ribosomal protein bL33 family.

The polypeptide is Large ribosomal subunit protein bL33 (Prochlorococcus marinus (strain SARG / CCMP1375 / SS120)).